Here is a 302-residue protein sequence, read N- to C-terminus: Light-independent protochlorophyllide reductase iron-sulfur ATP-binding protein (302 aa).

Residues 46 to 51 and Lys75 contribute to the ATP site; that span reads GIGKST. Ser50 lines the Mg(2+) pocket. [4Fe-4S] cluster is bound by residues Cys131 and Cys165. 216 to 217 provides a ligand contact to ATP; it reads NR.

The protein belongs to the NifH/BchL/ChlL family. In terms of assembly, homodimer. Protochlorophyllide reductase is composed of three subunits; BchL, BchN and BchB. The cofactor is [4Fe-4S] cluster.

The catalysed reaction is chlorophyllide a + oxidized 2[4Fe-4S]-[ferredoxin] + 2 ADP + 2 phosphate = protochlorophyllide a + reduced 2[4Fe-4S]-[ferredoxin] + 2 ATP + 2 H2O. Its pathway is porphyrin-containing compound metabolism; bacteriochlorophyll biosynthesis (light-independent). Functionally, component of the dark-operative protochlorophyllide reductase (DPOR) that uses Mg-ATP and reduced ferredoxin to reduce ring D of protochlorophyllide (Pchlide) to form chlorophyllide a (Chlide). This reaction is light-independent. The L component serves as a unique electron donor to the NB-component of the complex, and binds Mg-ATP. In Methylocella silvestris (strain DSM 15510 / CIP 108128 / LMG 27833 / NCIMB 13906 / BL2), this protein is Light-independent protochlorophyllide reductase iron-sulfur ATP-binding protein.